We begin with the raw amino-acid sequence, 168 residues long: MARYEDLPYRTCVGVMLINREGLVFIGRRAGGIEHVDDTHVWQMPQGGVDPGEDTWKAAKRELYEETSVNSVEKLAEVPDWLIYDIPRTVAGRAWKGRYRGQRQKWFAARFTGADSEINVVHPGGGHKAEFTSWRWEPMHNLPELIVPFKRPVYERVVKEFSQLAAAV.

A Nudix hydrolase domain is found at 8 to 159 (PYRTCVGVML…KRPVYERVVK (152 aa)). Residues 47–68 (GGVDPGEDTWKAAKRELYEETS) carry the Nudix box motif.

Belongs to the Nudix hydrolase family. RppH subfamily. Requires a divalent metal cation as cofactor.

Accelerates the degradation of transcripts by removing pyrophosphate from the 5'-end of triphosphorylated RNA, leading to a more labile monophosphorylated state that can stimulate subsequent ribonuclease cleavage. This Rhodopseudomonas palustris (strain ATCC BAA-98 / CGA009) protein is RNA pyrophosphohydrolase.